The sequence spans 754 residues: 5-methyltetrahydropteroyltriglutamate--homocysteine methyltransferase (754 aa).

Residues 17 to 20 and Lys-117 contribute to the 5-methyltetrahydropteroyltri-L-glutamate site; that span reads RELK. Residues 431-433 and Glu-484 each bind L-homocysteine; that span reads IGS. L-methionine is bound by residues 431–433 and Glu-484; that span reads IGS. 5-methyltetrahydropteroyltri-L-glutamate contacts are provided by residues 515–516 and Trp-561; that span reads RC. Asp-599 is an L-homocysteine binding site. Residue Asp-599 coordinates L-methionine. Glu-605 lines the 5-methyltetrahydropteroyltri-L-glutamate pocket. The Zn(2+) site is built by His-641, Cys-643, and Glu-665. His-694 (proton donor) is an active-site residue. A Zn(2+)-binding site is contributed by Cys-726.

The protein belongs to the vitamin-B12 independent methionine synthase family. The cofactor is Zn(2+).

The enzyme catalyses 5-methyltetrahydropteroyltri-L-glutamate + L-homocysteine = tetrahydropteroyltri-L-glutamate + L-methionine. Its pathway is amino-acid biosynthesis; L-methionine biosynthesis via de novo pathway; L-methionine from L-homocysteine (MetE route): step 1/1. Its function is as follows. Catalyzes the transfer of a methyl group from 5-methyltetrahydrofolate to homocysteine resulting in methionine formation. In Salmonella arizonae (strain ATCC BAA-731 / CDC346-86 / RSK2980), this protein is 5-methyltetrahydropteroyltriglutamate--homocysteine methyltransferase.